A 99-amino-acid chain; its full sequence is DNA-directed RNA polymerase subunit omega (99 aa).

Belongs to the RNA polymerase subunit omega family. In terms of assembly, the RNAP catalytic core consists of 2 alpha, 1 beta, 1 beta' and 1 omega subunit. When a sigma factor is associated with the core the holoenzyme is formed, which can initiate transcription.

The catalysed reaction is RNA(n) + a ribonucleoside 5'-triphosphate = RNA(n+1) + diphosphate. Its function is as follows. Promotes RNA polymerase assembly. Latches the N- and C-terminal regions of the beta' subunit thereby facilitating its interaction with the beta and alpha subunits. In Xylella fastidiosa (strain Temecula1 / ATCC 700964), this protein is DNA-directed RNA polymerase subunit omega.